The following is a 207-amino-acid chain: Large ribosomal subunit protein uL4 (207 aa).

The interval 58–85 (AGSGKKPFKQKGTGQARQGCRRAPQYPG) is disordered.

It belongs to the universal ribosomal protein uL4 family. Part of the 50S ribosomal subunit.

One of the primary rRNA binding proteins, this protein initially binds near the 5'-end of the 23S rRNA. It is important during the early stages of 50S assembly. It makes multiple contacts with different domains of the 23S rRNA in the assembled 50S subunit and ribosome. Its function is as follows. Forms part of the polypeptide exit tunnel. The chain is Large ribosomal subunit protein uL4 from Geotalea uraniireducens (strain Rf4) (Geobacter uraniireducens).